Consider the following 323-residue polypeptide: Glucokinase (323 aa).

8–13 (GDVGGT) contacts ATP.

The protein belongs to the bacterial glucokinase family.

Its subcellular location is the cytoplasm. It carries out the reaction D-glucose + ATP = D-glucose 6-phosphate + ADP + H(+). The polypeptide is Glucokinase (Yersinia pseudotuberculosis serotype I (strain IP32953)).